The following is a 333-amino-acid chain: Protein-methionine-sulfoxide reductase catalytic subunit MsrP (333 aa).

The segment at residues 1–43 is a signal peptide (tat-type signal); sequence MSKQRKLTEADVTPESVFYQRRKVLQALGITAASLALPHNAQA. Mo-molybdopterin is bound by residues asparagine 87, 90–91, cysteine 145, threonine 180, asparagine 232, arginine 237, and 248–250; these read YE and GIK.

Belongs to the MsrP family. Heterodimer of a catalytic subunit (MsrP) and a heme-binding subunit (MsrQ). Mo-molybdopterin is required as a cofactor. In terms of processing, predicted to be exported by the Tat system. The position of the signal peptide cleavage has not been experimentally proven.

It localises to the periplasm. The enzyme catalyses L-methionyl-[protein] + a quinone + H2O = L-methionyl-(S)-S-oxide-[protein] + a quinol. It catalyses the reaction L-methionyl-[protein] + a quinone + H2O = L-methionyl-(R)-S-oxide-[protein] + a quinol. Part of the MsrPQ system that repairs oxidized periplasmic proteins containing methionine sulfoxide residues (Met-O), using respiratory chain electrons. Thus protects these proteins from oxidative-stress damage caused by reactive species of oxygen and chlorine generated by the host defense mechanisms. MsrPQ is essential for the maintenance of envelope integrity under bleach stress, rescuing a wide series of structurally unrelated periplasmic proteins from methionine oxidation. The catalytic subunit MsrP is non-stereospecific, being able to reduce both (R-) and (S-) diastereoisomers of methionine sulfoxide. In Serratia proteamaculans (strain 568), this protein is Protein-methionine-sulfoxide reductase catalytic subunit MsrP.